The primary structure comprises 388 residues: Succinate--CoA ligase [ADP-forming] subunit beta (388 aa).

One can recognise an ATP-grasp domain in the interval 9 to 244 (KEILRKFGVA…LDEEDPAEIE (236 aa)). Residues Lys46, 53–55 (GRG), Glu99, Ala102, and Glu107 each bind ATP. Mg(2+) contacts are provided by Asn199 and Asp213. Residues Asn264 and 321-323 (GIM) each bind substrate.

This sequence belongs to the succinate/malate CoA ligase beta subunit family. As to quaternary structure, heterotetramer of two alpha and two beta subunits. Mg(2+) is required as a cofactor.

The enzyme catalyses succinate + ATP + CoA = succinyl-CoA + ADP + phosphate. The catalysed reaction is GTP + succinate + CoA = succinyl-CoA + GDP + phosphate. Its pathway is carbohydrate metabolism; tricarboxylic acid cycle; succinate from succinyl-CoA (ligase route): step 1/1. Its function is as follows. Succinyl-CoA synthetase functions in the citric acid cycle (TCA), coupling the hydrolysis of succinyl-CoA to the synthesis of either ATP or GTP and thus represents the only step of substrate-level phosphorylation in the TCA. The beta subunit provides nucleotide specificity of the enzyme and binds the substrate succinate, while the binding sites for coenzyme A and phosphate are found in the alpha subunit. This is Succinate--CoA ligase [ADP-forming] subunit beta from Burkholderia thailandensis (strain ATCC 700388 / DSM 13276 / CCUG 48851 / CIP 106301 / E264).